The primary structure comprises 81 residues: Sulfur carrier protein TusA (81 aa).

The active-site Cysteine persulfide intermediate is the Cys-19.

The protein belongs to the sulfur carrier protein TusA family.

The protein localises to the cytoplasm. Functionally, sulfur carrier protein which probably makes part of a sulfur-relay system. The chain is Sulfur carrier protein TusA from Shewanella woodyi (strain ATCC 51908 / MS32).